The following is a 498-amino-acid chain: COP9 signalosome complex subunit 1 (498 aa).

Positions 249–430 (SYLEAANSFI…HVLVSTQGDK (182 aa)) constitute a PCI domain.

This sequence belongs to the CSN1 family. Component of the COP9 signalosome (CSN) complex.

It localises to the cytoplasm. It is found in the nucleus. In terms of biological role, component of the COP9 signalosome (CSN) complex that acts as an regulator of the ubiquitin (Ubl) conjugation pathway by mediating the deneddylation of the cullin subunit of SCF-type E3 ubiquitin-protein ligase complexes. The CSN complex seems to link protein degradation to sexual development. Required for fruit body formation. This is COP9 signalosome complex subunit 1 (csnA) from Emericella nidulans (strain FGSC A4 / ATCC 38163 / CBS 112.46 / NRRL 194 / M139) (Aspergillus nidulans).